The sequence spans 448 residues: Adenylosuccinate synthetase (448 aa).

GTP-binding positions include 22-28 (GDEGKGK) and 50-52 (GHT). The active-site Proton acceptor is the Asp23. Positions 23 and 50 each coordinate Mg(2+). Residues 23 to 26 (DEGK), 48 to 51 (NAGH), Thr139, Arg153, Gln234, Thr249, and Arg321 contribute to the IMP site. The active-site Proton donor is the His51. 317–323 (SVTGRPR) serves as a coordination point for substrate. GTP-binding positions include Arg323, 349–351 (KLD), and 431–433 (STG).

The protein belongs to the adenylosuccinate synthetase family. Homodimer. Mg(2+) is required as a cofactor.

Its subcellular location is the cytoplasm. The enzyme catalyses IMP + L-aspartate + GTP = N(6)-(1,2-dicarboxyethyl)-AMP + GDP + phosphate + 2 H(+). The protein operates within purine metabolism; AMP biosynthesis via de novo pathway; AMP from IMP: step 1/2. Functionally, plays an important role in the de novo pathway of purine nucleotide biosynthesis. Catalyzes the first committed step in the biosynthesis of AMP from IMP. The chain is Adenylosuccinate synthetase from Burkholderia mallei (strain NCTC 10247).